The chain runs to 362 residues: Class I histocompatibility antigen, Gogo-B*0103 alpha chain (362 aa).

Residues 1 to 24 form the signal peptide; it reads MRVTAPRTLLLLLSAALALTETWA. The alpha-1 stretch occupies residues 25–114; that stretch reads GSHSMRYFDT…ALRYYNQSEA (90 aa). The Extracellular segment spans residues 25-308; sequence GSHSMRYFDT…EPSSQSTIPI (284 aa). An N-linked (GlcNAc...) asparagine glycan is attached at Asn110. The alpha-2 stretch occupies residues 115–206; it reads GSHTIQWMYG…ENGRETLQRA (92 aa). 2 cysteine pairs are disulfide-bonded: Cys125–Cys188 and Cys227–Cys283. Positions 207 to 298 are alpha-3; the sequence is DTPKTHVTHH…GLPKPLTLRW (92 aa). The Ig-like C1-type domain maps to 209–295; the sequence is PKTHVTHHPI…QHEGLPKPLT (87 aa). The tract at residues 299 to 308 is connecting peptide; it reads EPSSQSTIPI. The helical transmembrane segment at 309–332 threads the bilayer; the sequence is VGIVAGLAVLAVVVIGAVVTAVIC. Residues 333–362 lie on the Cytoplasmic side of the membrane; it reads RRKSSGGKGGSYSQAASSDSAQGSDVSLTA. Positions 335-362 are disordered; it reads KSSGGKGGSYSQAASSDSAQGSDVSLTA. Positions 343-362 are enriched in low complexity; that stretch reads SYSQAASSDSAQGSDVSLTA.

The protein belongs to the MHC class I family. In terms of assembly, heterodimer of an alpha chain and a beta chain (beta-2-microglobulin).

It localises to the membrane. Functionally, involved in the presentation of foreign antigens to the immune system. The chain is Class I histocompatibility antigen, Gogo-B*0103 alpha chain from Gorilla gorilla gorilla (Western lowland gorilla).